Consider the following 316-residue polypeptide: UPF0725 protein At1g02770 (316 aa).

The protein belongs to the UPF0725 (EMB2204) family.

The sequence is that of UPF0725 protein At1g02770 from Arabidopsis thaliana (Mouse-ear cress).